A 769-amino-acid polypeptide reads, in one-letter code: Cullin-3 (769 aa).

The interval 614 to 655 (DRELPSTTSSTTTTTTTATSSSTSTSPSSSSSSISTPTPSKS) is disordered. Positions 618-653 (PSTTSSTTTTTTTATSSSTSTSPSSSSSSISTPTPS) are enriched in low complexity. Residues 699–761 (DRKHQIEASI…REYLERSKQD (63 aa)) form the Cullin neddylation domain. Lys-713 participates in a covalent cross-link: Glycyl lysine isopeptide (Lys-Gly) (interchain with G-Cter in NEDD8).

The protein belongs to the cullin family. In terms of processing, neddylated. Deneddylated via its interaction with the COP9 signalosome (CSN) complex.

The protein resides in the nucleus. Its pathway is protein modification; protein ubiquitination. Functionally, probable core component of cullin-based SCF-like E3 ubiquitin-protein ligase complexes which mediate the ubiquitination and subsequent proteasomal degradation of target proteins. The E3 ubiquitin-protein ligase activity of the complex is dependent on the neddylation of the cullin subunit. The sequence is that of Cullin-3 (culC) from Dictyostelium discoideum (Social amoeba).